We begin with the raw amino-acid sequence, 365 residues long: 2-aminoethylphosphonate--pyruvate transaminase (365 aa).

Position 194 is an N6-(pyridoxal phosphate)lysine (Lys194).

Belongs to the class-V pyridoxal-phosphate-dependent aminotransferase family. PhnW subfamily. In terms of assembly, homodimer. It depends on pyridoxal 5'-phosphate as a cofactor.

It catalyses the reaction (2-aminoethyl)phosphonate + pyruvate = phosphonoacetaldehyde + L-alanine. Functionally, involved in phosphonate degradation. This chain is 2-aminoethylphosphonate--pyruvate transaminase, found in Bacillus thuringiensis subsp. konkukian (strain 97-27).